The sequence spans 102 residues: Large ribosomal subunit protein bL21 (102 aa).

The protein belongs to the bacterial ribosomal protein bL21 family. As to quaternary structure, part of the 50S ribosomal subunit. Contacts protein L20.

This protein binds to 23S rRNA in the presence of protein L20. The sequence is that of Large ribosomal subunit protein bL21 from Campylobacter hominis (strain ATCC BAA-381 / DSM 21671 / CCUG 45161 / LMG 19568 / NCTC 13146 / CH001A).